Reading from the N-terminus, the 219-residue chain is Ribonuclease HII (219 aa).

In terms of domain architecture, RNase H type-2 spans 10-219 (HLEAGTDEAG…LLPEQTVLDL (210 aa)). Positions 16, 17, and 108 each coordinate a divalent metal cation.

It belongs to the RNase HII family. The cofactor is Mn(2+). Mg(2+) serves as cofactor.

Its subcellular location is the cytoplasm. The catalysed reaction is Endonucleolytic cleavage to 5'-phosphomonoester.. In terms of biological role, endonuclease that specifically degrades the RNA of RNA-DNA hybrids. The chain is Ribonuclease HII from Flavobacterium psychrophilum (strain ATCC 49511 / DSM 21280 / CIP 103535 / JIP02/86).